The sequence spans 261 residues: Ribonuclease HII (261 aa).

Over residues 1–20 (MIRDKSAKRPAKDAPKKAAV) the composition is skewed to basic and acidic residues. The disordered stretch occupies residues 1 to 23 (MIRDKSAKRPAKDAPKKAAVKEA). The region spanning 42–230 (WPVAGCDEAG…VAAARAKHMP (189 aa)) is the RNase H type-2 domain. Positions 48, 49, and 139 each coordinate a divalent metal cation.

It belongs to the RNase HII family. The cofactor is Mn(2+). It depends on Mg(2+) as a cofactor.

The protein localises to the cytoplasm. The enzyme catalyses Endonucleolytic cleavage to 5'-phosphomonoester.. In terms of biological role, endonuclease that specifically degrades the RNA of RNA-DNA hybrids. In Bradyrhizobium diazoefficiens (strain JCM 10833 / BCRC 13528 / IAM 13628 / NBRC 14792 / USDA 110), this protein is Ribonuclease HII.